An 82-amino-acid chain; its full sequence is Sec-independent protein translocase protein TatA (82 aa).

The helical transmembrane segment at 1 to 21 (MGGISVWQLLIIAVIVVLLFG) threads the bilayer. A disordered region spans residues 41–82 (KAMSEDEPAKKDDKDADFEPKSLEEQQKKEAAPESKKDKEQA). The span at 42–82 (AMSEDEPAKKDDKDADFEPKSLEEQQKKEAAPESKKDKEQA) shows a compositional bias: basic and acidic residues.

It belongs to the TatA/E family. In terms of assembly, the Tat system comprises two distinct complexes: a TatABC complex, containing multiple copies of TatA, TatB and TatC subunits, and a separate TatA complex, containing only TatA subunits. Substrates initially bind to the TatABC complex, which probably triggers association of the separate TatA complex to form the active translocon.

The protein resides in the cell inner membrane. Its function is as follows. Part of the twin-arginine translocation (Tat) system that transports large folded proteins containing a characteristic twin-arginine motif in their signal peptide across membranes. TatA could form the protein-conducting channel of the Tat system. The polypeptide is Sec-independent protein translocase protein TatA (Vibrio campbellii (strain ATCC BAA-1116)).